The sequence spans 383 residues: Galactokinase (383 aa).

A substrate-binding site is contributed by 34–37 (EHTD). ATP is bound at residue 124–130 (GAGLSSS). Residues S130 and E162 each contribute to the Mg(2+) site. The active-site Proton acceptor is D174. A substrate-binding site is contributed by Y223.

Belongs to the GHMP kinase family. GalK subfamily.

The protein resides in the cytoplasm. It carries out the reaction alpha-D-galactose + ATP = alpha-D-galactose 1-phosphate + ADP + H(+). Its pathway is carbohydrate metabolism; galactose metabolism. In terms of biological role, catalyzes the transfer of the gamma-phosphate of ATP to D-galactose to form alpha-D-galactose-1-phosphate (Gal-1-P). In Yersinia pseudotuberculosis serotype O:1b (strain IP 31758), this protein is Galactokinase.